Reading from the N-terminus, the 705-residue chain is Polyribonucleotide nucleotidyltransferase (705 aa).

The Mg(2+) site is built by Asp-487 and Asp-493. The KH domain occupies 554 to 613; that stretch reads PKILTMKINPDKIRDVIGPSGKQINKIIEDTGVKIDIEQDGTIFISSTEEDMNQKAKKII. In terms of domain architecture, S1 motif spans 623 to 691; the sequence is GQLYLGKVKR…KQGRVNLSRK (69 aa).

Belongs to the polyribonucleotide nucleotidyltransferase family. Mg(2+) is required as a cofactor.

The protein resides in the cytoplasm. It carries out the reaction RNA(n+1) + phosphate = RNA(n) + a ribonucleoside 5'-diphosphate. Functionally, involved in mRNA degradation. Catalyzes the phosphorolysis of single-stranded polyribonucleotides processively in the 3'- to 5'-direction. This Bacillus pumilus (strain SAFR-032) protein is Polyribonucleotide nucleotidyltransferase.